The sequence spans 152 residues: Regulatory protein RecX (152 aa).

Belongs to the RecX family.

Its subcellular location is the cytoplasm. In terms of biological role, modulates RecA activity. The chain is Regulatory protein RecX from Haemophilus influenzae (strain 86-028NP).